Here is a 2591-residue protein sequence, read N- to C-terminus: Eukaryotic translation initiation factor 2-alpha kinase PK4 (2591 aa).

Over 1–16 (MYNKGINICLNEDNKC) the chain is Cytoplasmic. The helical transmembrane segment at 17 to 37 (IILLHIIFNKCIVSFVASHIL) threads the bilayer. Topologically, residues 38–1488 (VEGKICFLNR…EFSSQKHKKS (1451 aa)) are lumenal. Residues 1028–1048 (KKKRNSKKGENRNKKRKTQKR) are disordered. Residues 1489–1509 (WYWNIFYAITLVIVIPFIFIY) traverse the membrane as a helical segment. Residues 1510-2591 (RLFKKQTNNK…NIINGNEVDH (1082 aa)) are Cytoplasmic-facing. Positions 1781-1840 (NLNSADEENKSPYAKKYSDEKKNRSKSSKYIENTQSNNNDNTNGNMNVGNHINNDKMNNK) are disordered. A compositionally biased stretch (low complexity) spans 1813-1832 (NTQSNNNDNTNGNMNVGNHI). Residues 1880–1888 (IGQGGFGSV) and K1905 each bind ATP. Disordered stretches follow at residues 2123-2157 (DNDE…GGDI) and 2183-2212 (IKNT…TNNN). A compositionally biased stretch (basic and acidic residues) spans 2134–2143 (KKNDNDERKS). The Protein kinase domain occupies 2181-2532 (MTIKNTQGTS…KIKVLLDPHL (352 aa)). D2369 functions as the Proton acceptor in the catalytic mechanism. The residue at position 2436 (T2436) is a Phosphothreonine; by autocatalysis. The span at 2558–2574 (STNPNGDIKENVNQNNL) shows a compositional bias: polar residues. A disordered region spans residues 2558-2591 (STNPNGDIKENVNQNNLVDDKGNNNIINGNEVDH). A compositionally biased stretch (low complexity) spans 2580–2591 (NNNIINGNEVDH).

This sequence belongs to the protein kinase superfamily. Ser/Thr protein kinase family. GCN2 subfamily. In terms of assembly, may form oligomers in response to stress; oligomerization may result in catalytic activity. Interacts with BIP; the interaction is disrupted in response to stress.

Its subcellular location is the endoplasmic reticulum membrane. It catalyses the reaction L-seryl-[protein] + ATP = O-phospho-L-seryl-[protein] + ADP + H(+). The catalysed reaction is L-threonyl-[protein] + ATP = O-phospho-L-threonyl-[protein] + ADP + H(+). With respect to regulation, dissociation from BIP and oligomerization, may results autophosphorylation and kinase activity induction. During the asexual blood stage, phosphorylates translation factor eIF2alpha in late schizonts resulting in protein translation inhibition. Plays a role in trophozoite differentiation into schizonts. The polypeptide is Eukaryotic translation initiation factor 2-alpha kinase PK4 (Plasmodium berghei (strain Anka)).